The chain runs to 511 residues: Phospho-2-dehydro-3-deoxyheptonate aldolase 2, chloroplastic (511 aa).

This sequence belongs to the class-II DAHP synthase family. Leaves, stems, tuber and roots.

Its subcellular location is the plastid. It is found in the chloroplast. It carries out the reaction D-erythrose 4-phosphate + phosphoenolpyruvate + H2O = 7-phospho-2-dehydro-3-deoxy-D-arabino-heptonate + phosphate. It participates in metabolic intermediate biosynthesis; chorismate biosynthesis; chorismate from D-erythrose 4-phosphate and phosphoenolpyruvate: step 1/7. The sequence is that of Phospho-2-dehydro-3-deoxyheptonate aldolase 2, chloroplastic (SHKB) from Solanum tuberosum (Potato).